We begin with the raw amino-acid sequence, 236 residues long: Small ribosomal subunit protein uS2c (236 aa).

It belongs to the universal ribosomal protein uS2 family.

It localises to the plastid. The protein localises to the chloroplast. The sequence is that of Small ribosomal subunit protein uS2c (rps2) from Citrus sinensis (Sweet orange).